The sequence spans 614 residues: Phosphomethylpyrimidine synthase (614 aa).

Substrate contacts are provided by residues Asn230, Met259, Tyr288, His324, 344 to 346, 385 to 388, and Glu424; these read SRG and DGLR. His428 contacts Zn(2+). Tyr451 contributes to the substrate binding site. His492 is a Zn(2+) binding site. [4Fe-4S] cluster is bound by residues Cys572, Cys575, and Cys580.

The protein belongs to the ThiC family. In terms of assembly, homodimer. Requires [4Fe-4S] cluster as cofactor.

It carries out the reaction 5-amino-1-(5-phospho-beta-D-ribosyl)imidazole + S-adenosyl-L-methionine = 4-amino-2-methyl-5-(phosphooxymethyl)pyrimidine + CO + 5'-deoxyadenosine + formate + L-methionine + 3 H(+). It functions in the pathway cofactor biosynthesis; thiamine diphosphate biosynthesis. Its function is as follows. Catalyzes the synthesis of the hydroxymethylpyrimidine phosphate (HMP-P) moiety of thiamine from aminoimidazole ribotide (AIR) in a radical S-adenosyl-L-methionine (SAM)-dependent reaction. The protein is Phosphomethylpyrimidine synthase of Stenotrophomonas maltophilia (strain K279a).